A 1792-amino-acid chain; its full sequence is BTB/POZ domain-containing protein 8 (1792 aa).

2 BTB domains span residues 58–127 and 206–273; these read TDVT…NIKN and PDID…DIPD. Disordered stretches follow at residues 528 to 554, 581 to 658, 670 to 692, 707 to 768, 788 to 815, 831 to 989, 1151 to 1283, and 1519 to 1607; these read DKGD…SDSG, SDGL…PRQV, TGQK…SGAR, KPLK…CDSP, SRPV…NNSV, AILK…KPHK, ERTN…SNDR, and SIDS…KSLD. Composition is skewed to polar residues over residues 541–552 and 588–601; these read FSSSQQRKQVSD and GHSS…INKT. 2 stretches are compositionally biased toward basic and acidic residues: residues 602 to 625 and 640 to 650; these read LKQD…ELKT and SKTENGDKARL. Polar residues predominate over residues 724-740; that stretch reads GPSSRSTDSSMEFSIST. Positions 744–758 are enriched in basic and acidic residues; the sequence is DEPKENGSTEEEKPS. The span at 838–865 shows a compositional bias: polar residues; that stretch reads TSNGCTAAQQRTKSTPSNLTKTQGSQGE. A compositionally biased stretch (low complexity) spans 866–877; that stretch reads SPNSVKSSVSSR. Basic and acidic residues-rich tracts occupy residues 878–891 and 927–939; these read QSDE…HNTT and KKGE…DSKQ. A compositionally biased stretch (polar residues) spans 947-956; that stretch reads ISKTQPSSQR. The span at 969–987 shows a compositional bias: basic and acidic residues; sequence MFHDVRDNNNKDSVSEQKP. Composition is skewed to polar residues over residues 1151–1160 and 1195–1215; these read ERTNGTLNSA and SDVS…PKNM. Residues 1250–1259 are compositionally biased toward low complexity; it reads SDTGSATTSS. Residues 1566–1594 show a composition bias toward basic and acidic residues; the sequence is IQQRSKFLDSDVKSQERPCHLDLHQREPN. The segment covering 1597 to 1607 has biased composition (polar residues); it reads IPKNSSTKSLD.

In terms of assembly, interacts (via N-terminus) with adapter protein complex AP-2 subunits alpha (AP2A1) and beta (AP2B1). As to expression, highly expressed in fetal brain. Weakly expressed in adult brain and prostate.

It localises to the cell projection. Its subcellular location is the axon. The protein localises to the presynapse. The protein resides in the cytoplasmic vesicle. It is found in the clathrin-coated vesicle. It localises to the nucleus. Functionally, involved in clathrin-mediated endocytosis at the synapse. Plays a role in neuronal development and in synaptic vesicle recycling in mature neurons, a process required for normal synaptic transmission. The chain is BTB/POZ domain-containing protein 8 from Homo sapiens (Human).